We begin with the raw amino-acid sequence, 384 residues long: Anhydro-N-acetylmuramic acid kinase (384 aa).

12-19 (GTSLDGVD) contributes to the ATP binding site.

Belongs to the anhydro-N-acetylmuramic acid kinase family.

The catalysed reaction is 1,6-anhydro-N-acetyl-beta-muramate + ATP + H2O = N-acetyl-D-muramate 6-phosphate + ADP + H(+). The protein operates within amino-sugar metabolism; 1,6-anhydro-N-acetylmuramate degradation. It functions in the pathway cell wall biogenesis; peptidoglycan recycling. Catalyzes the specific phosphorylation of 1,6-anhydro-N-acetylmuramic acid (anhMurNAc) with the simultaneous cleavage of the 1,6-anhydro ring, generating MurNAc-6-P. Is required for the utilization of anhMurNAc either imported from the medium or derived from its own cell wall murein, and thus plays a role in cell wall recycling. The chain is Anhydro-N-acetylmuramic acid kinase from Cronobacter sakazakii (strain ATCC BAA-894) (Enterobacter sakazakii).